Consider the following 102-residue polypeptide: Monothiol glutaredoxin-S4 (102 aa).

Positions methionine 1–tryptophan 101 constitute a Glutaredoxin domain. Cysteine 21 provides a ligand contact to [2Fe-2S] cluster. The Responsive for interaction with TGA factors motif lies at alanine 99 to leucine 102.

This sequence belongs to the glutaredoxin family. CC-type subfamily.

The protein resides in the cytoplasm. It localises to the nucleus. Its function is as follows. May only reduce GSH-thiol disulfides, but not protein disulfides. This chain is Monothiol glutaredoxin-S4 (GRXS4), found in Arabidopsis thaliana (Mouse-ear cress).